The sequence spans 237 residues: HTH-type transcriptional regulator GmuR (237 aa).

In terms of domain architecture, HTH gntR-type spans 1-69 (MNKYEIIANE…RGHGTFIIQS (69 aa)). The H-T-H motif DNA-binding region spans 29–48 (EVSLAKEFNSSRMTMKRALD).

The protein localises to the cytoplasm. Its function is as follows. Transcriptional repressor of the gmuBACDREFG operon which is involved in the uptake and degradation of glucomannan. This is HTH-type transcriptional regulator GmuR (gmuR) from Bacillus subtilis (strain 168).